We begin with the raw amino-acid sequence, 164 residues long: V-type proton ATPase subunit c' (164 aa).

Residues 1–15 (MTDDLVNEYAPAFAP) lie on the Lumenal side of the membrane. Residues 16-36 (FFGFAGCAAAMILSSLGAAIG) traverse the membrane as a helical segment. At 37–58 (TAKSGIGISGIGTFRPELIMKS) the chain is on the cytoplasmic side. A helical transmembrane segment spans residues 59 to 79 (LIPVVMSGILAVYGLVVAVLV). Residues 80–97 (AGGLSPTEEYTLFNGFMH) lie on the Lumenal side of the membrane. A helical membrane pass occupies residues 98–118 (LAAGLCVGFACLSSGYAIGIV). Residues 119-135 (GDVGVRKFMHQPRLFVG) are Cytoplasmic-facing. The chain crosses the membrane as a helical span at residues 136–156 (IVLILIFAEVLGLYGMIIALI). At 157–164 (LNTRGSGN) the chain is on the lumenal side.

It belongs to the V-ATPase proteolipid subunit family. V-ATPase is a heteromultimeric enzyme composed of a peripheral catalytic V1 complex (components A to H) attached to an integral membrane V0 proton pore complex (components: a, c, c', c'', d, e, f and VOA1). The decameric c-ring forms the proton-conducting pore, and is composed of eight proteolipid subunits c, one subunit c' and one subunit c''.

It localises to the vacuole membrane. In terms of biological role, proton-conducting pore forming subunit of the V0 complex of vacuolar(H+)-ATPase (V-ATPase), a multisubunit enzyme composed of a peripheral complex (V1) that hydrolyzes ATP and a membrane integral complex (V0) that translocates protons. V-ATPase is responsible for acidifying and maintaining the pH of intracellular compartments. The protein is V-type proton ATPase subunit c' (VMA11) of Eremothecium gossypii (strain ATCC 10895 / CBS 109.51 / FGSC 9923 / NRRL Y-1056) (Yeast).